Here is a 360-residue protein sequence, read N- to C-terminus: Protein Wnt-2 (360 aa).

A signal peptide spans 1 to 25 (MNAPVGGIWLWLPLLLTWLSPEVSS). Intrachain disulfides connect C76-C87, C127-C135, C137-C157, C206-C220, C208-C215, C278-C309, C294-C304, C308-C348, C324-C339, C326-C336, and C331-C332. S212 carries O-palmitoleoyl serine; by PORCN lipidation. A glycan (N-linked (GlcNAc...) asparagine) is linked at N295.

This sequence belongs to the Wnt family. In terms of processing, palmitoleoylation is required for efficient binding to frizzled receptors. Depalmitoleoylation leads to Wnt signaling pathway inhibition.

It localises to the secreted. The protein resides in the extracellular space. Its subcellular location is the extracellular matrix. In terms of biological role, ligand for members of the frizzled family of seven transmembrane receptors. Probable developmental protein. May be a signaling molecule which affects the development of discrete regions of tissues. Is likely to signal over only few cell diameters. The sequence is that of Protein Wnt-2 (WNT2) from Rhinolophus ferrumequinum (Greater horseshoe bat).